The chain runs to 75 residues: Small ribosomal subunit protein bS18 (75 aa).

This sequence belongs to the bacterial ribosomal protein bS18 family. In terms of assembly, part of the 30S ribosomal subunit. Forms a tight heterodimer with protein bS6.

Binds as a heterodimer with protein bS6 to the central domain of the 16S rRNA, where it helps stabilize the platform of the 30S subunit. The chain is Small ribosomal subunit protein bS18 (rbsR) from Rhodobacter capsulatus (strain ATCC BAA-309 / NBRC 16581 / SB1003).